A 427-amino-acid polypeptide reads, in one-letter code: 3-phosphoshikimate 1-carboxyvinyltransferase (427 aa).

The 3-phosphoshikimate site is built by Lys-20, Ser-21, and Arg-25. Lys-20 serves as a coordination point for phosphoenolpyruvate. Positions 92 and 120 each coordinate phosphoenolpyruvate. 3-phosphoshikimate-binding residues include Ser-166, Gln-168, Asp-312, and Lys-339. Gln-168 serves as a coordination point for phosphoenolpyruvate. Asp-312 (proton acceptor) is an active-site residue. 2 residues coordinate phosphoenolpyruvate: Arg-343 and Arg-385.

Belongs to the EPSP synthase family. As to quaternary structure, monomer.

Its subcellular location is the cytoplasm. The catalysed reaction is 3-phosphoshikimate + phosphoenolpyruvate = 5-O-(1-carboxyvinyl)-3-phosphoshikimate + phosphate. It functions in the pathway metabolic intermediate biosynthesis; chorismate biosynthesis; chorismate from D-erythrose 4-phosphate and phosphoenolpyruvate: step 6/7. In terms of biological role, catalyzes the transfer of the enolpyruvyl moiety of phosphoenolpyruvate (PEP) to the 5-hydroxyl of shikimate-3-phosphate (S3P) to produce enolpyruvyl shikimate-3-phosphate and inorganic phosphate. The polypeptide is 3-phosphoshikimate 1-carboxyvinyltransferase (Streptococcus mutans serotype c (strain ATCC 700610 / UA159)).